A 173-amino-acid polypeptide reads, in one-letter code: Protein GrpE (173 aa).

Belongs to the GrpE family. In terms of assembly, homodimer.

Its subcellular location is the cytoplasm. Participates actively in the response to hyperosmotic and heat shock by preventing the aggregation of stress-denatured proteins, in association with DnaK and GrpE. It is the nucleotide exchange factor for DnaK and may function as a thermosensor. Unfolded proteins bind initially to DnaJ; upon interaction with the DnaJ-bound protein, DnaK hydrolyzes its bound ATP, resulting in the formation of a stable complex. GrpE releases ADP from DnaK; ATP binding to DnaK triggers the release of the substrate protein, thus completing the reaction cycle. Several rounds of ATP-dependent interactions between DnaJ, DnaK and GrpE are required for fully efficient folding. This chain is Protein GrpE, found in Campylobacter fetus subsp. fetus (strain 82-40).